The primary structure comprises 91 residues: Small ribosomal subunit protein bS16 (91 aa).

It belongs to the bacterial ribosomal protein bS16 family.

This Exiguobacterium sp. (strain ATCC BAA-1283 / AT1b) protein is Small ribosomal subunit protein bS16.